Reading from the N-terminus, the 294-residue chain is Porphobilinogen deaminase (294 aa).

Cys-232 carries the post-translational modification S-(dipyrrolylmethanemethyl)cysteine.

It belongs to the HMBS family. As to quaternary structure, monomer. Dipyrromethane serves as cofactor.

It carries out the reaction 4 porphobilinogen + H2O = hydroxymethylbilane + 4 NH4(+). The protein operates within porphyrin-containing compound metabolism; protoporphyrin-IX biosynthesis; coproporphyrinogen-III from 5-aminolevulinate: step 2/4. In terms of biological role, tetrapolymerization of the monopyrrole PBG into the hydroxymethylbilane pre-uroporphyrinogen in several discrete steps. This is Porphobilinogen deaminase from Corynebacterium diphtheriae (strain ATCC 700971 / NCTC 13129 / Biotype gravis).